The sequence spans 132 residues: Replication enhancer protein (132 aa).

Belongs to the geminiviridae replication enhancer protein family. As to quaternary structure, homooligomer. Interacts with the replication-associated protein (REP). Interacts with host proliferating cell nuclear antigen (PCNA). Interacts with host retinoblastoma-related protein 1 (RBR1), and may thereby deregulate the host cell cycle. Oligomerization and interaction with PCNA are necessary for optimal replication enhancement.

Functionally, increases viral DNA accumulation. Enhances infectivity and symptom expression. The protein is Replication enhancer protein of Abutilon (Upland cotton).